A 1374-amino-acid chain; its full sequence is Y' element ATP-dependent helicase YLL067C (1374 aa).

The tract at residues 321–345 (AGEAASSDHDQKISRVTRKRPREPK) is disordered. One can recognise a Helicase ATP-binding domain in the interval 375–552 (EIYMADTPSV…LQRIGLTGLA (178 aa)). An ATP-binding site is contributed by 388 to 395 (APPGYGKT). Residues 498–501 (DEFH) carry the DEAH box motif. One can recognise a Helicase C-terminal domain in the interval 609–758 (KLLLALFEIE…EFYGLESKKG (150 aa)). Over residues 832 to 1011 (ANASTNATTN…ATTTESTNAS (180 aa)) the composition is skewed to low complexity. The disordered stretch occupies residues 832-1035 (ANASTNATTN…RFHPVTDINK (204 aa)). Residues 1012 to 1035 (AKEDANKDGNAEDNRFHPVTDINK) show a composition bias toward basic and acidic residues.

Belongs to the helicase family. Yeast subtelomeric Y' repeat subfamily.

In terms of biological role, catalyzes DNA unwinding and is involved in telomerase-independent telomere maintenance. The chain is Y' element ATP-dependent helicase YLL067C from Saccharomyces cerevisiae (strain ATCC 204508 / S288c) (Baker's yeast).